The primary structure comprises 77 residues: Large ribosomal subunit protein bL28 (77 aa).

Belongs to the bacterial ribosomal protein bL28 family.

This chain is Large ribosomal subunit protein bL28, found in Polaromonas naphthalenivorans (strain CJ2).